The sequence spans 154 residues: Aspartate carbamoyltransferase regulatory chain (154 aa).

Zn(2+) is bound by residues Cys109, Cys114, Cys138, and Cys141.

Belongs to the PyrI family. Contains catalytic and regulatory chains. Zn(2+) serves as cofactor.

Functionally, involved in allosteric regulation of aspartate carbamoyltransferase. The sequence is that of Aspartate carbamoyltransferase regulatory chain from Sodalis glossinidius (strain morsitans).